The chain runs to 373 residues: Indole glucosinolate O-methyltransferase 2 (373 aa).

S-adenosyl-L-homocysteine-binding residues include G217, D240, D260, M261, and K274. The Proton acceptor role is filled by H278.

It belongs to the class I-like SAM-binding methyltransferase superfamily. Cation-independent O-methyltransferase family.

The protein operates within secondary metabolite biosynthesis. In terms of biological role, involved in indole glucosinolate biosynthesis. Catalyzes methoxylation reactions of the glucosinolate indole ring. Converts the hydroxy intermediates 4-hydroxy-indol-3-yl-methylglucosinolate (4OH-I3M) and 1-hydroxy-indol-3-yl-methylglucosinolate (1OH-I3M) to 4-methoxy-indol-3-yl-methylglucosinolate (4MO-I3M) and 1-methoxy-indol-3-yl-methylglucosinolate (1MO-I3M), respectively. This is Indole glucosinolate O-methyltransferase 2 from Arabidopsis thaliana (Mouse-ear cress).